The sequence spans 529 residues: DNA-binding protein (529 aa).

A compositionally biased stretch (basic and acidic residues) spans 1–17; it reads MASREEEQRETTPERGR. Disordered regions lie at residues 1 to 107 and 125 to 166; these read MASR…IVDS and PVLI…AESE. The span at 129 to 139 shows a compositional bias: basic residues; that stretch reads KHGKGGKRTVR. The span at 155–165 shows a compositional bias: acidic residues; that stretch reads EEEEEPSEAES. Position 195 is a phosphotyrosine; by host (tyrosine 195). Zn(2+) is bound by residues cysteine 284 and histidine 286. The flexible loop stretch occupies residues 297-331; sequence IEMDVTSENGQRALKEQSSKAKIVKNRWGRNVVQI. Positions 339, 355, 396, 398, 450, and 467 each coordinate Zn(2+). The C-terminal arm, DBP binding stretch occupies residues 513–529; that stretch reads VSLPVAHSDARQNPFDF.

The protein belongs to the adenoviridae E2A DNA-binding protein family. As to quaternary structure, homomultimerizes on viral ssDNA bound to pTP. Forms a initiation complex with viral polymerase, pTP and hosts NFIA and POU2F1/OCT1. Interacts with host SRCAP.

The protein resides in the host nucleus. In terms of biological role, plays a role in the elongation phase of viral strand displacement replication by unwinding the template in an ATP-independent fashion, employing its capacity to form multimers. Also enhances the rate of initiation. Released from template upon second strand synthesis. Assembles in complex with viral pTP, viral pol, host NFIA and host POU2F1/OCT1 on viral origin of replication. Covers the whole ssDNA genome during synthesis. The complementary strand synthesis induces its relese from DNA template. May inhibit cellular transcription mediated by the interaction between host SRCAP and CBP. This Human adenovirus C serotype 5 (HAdV-5) protein is DNA-binding protein.